The primary structure comprises 379 residues: Cytochrome b (379 aa).

The next 4 helical transmembrane spans lie at 33–53, 77–98, 113–133, and 178–198; these read FGSL…FLAM, WLIR…YLHI, WNIG…GYVL, and FFAF…IHFF. Heme b is bound by residues His-83 and His-97. His-182 and His-196 together coordinate heme b. His-201 is an a ubiquinone binding site. A run of 4 helical transmembrane segments spans residues 226–246, 288–308, 320–340, and 347–367; these read IKDI…VLFS, LGGV…PMLH, FSQC…WIGG, and YITI…IVSR.

Belongs to the cytochrome b family. The cytochrome bc1 complex contains 11 subunits: 3 respiratory subunits (MT-CYB, CYC1 and UQCRFS1), 2 core proteins (UQCRC1 and UQCRC2) and 6 low-molecular weight proteins (UQCRH/QCR6, UQCRB/QCR7, UQCRQ/QCR8, UQCR10/QCR9, UQCR11/QCR10 and a cleavage product of UQCRFS1). This cytochrome bc1 complex then forms a dimer. Requires heme b as cofactor.

The protein resides in the mitochondrion inner membrane. Its function is as follows. Component of the ubiquinol-cytochrome c reductase complex (complex III or cytochrome b-c1 complex) that is part of the mitochondrial respiratory chain. The b-c1 complex mediates electron transfer from ubiquinol to cytochrome c. Contributes to the generation of a proton gradient across the mitochondrial membrane that is then used for ATP synthesis. The chain is Cytochrome b (MT-CYB) from Dolichotis patagonum (Patagonian mara).